A 188-amino-acid polypeptide reads, in one-letter code: ATP synthase subunit delta (188 aa).

It belongs to the ATPase delta chain family. As to quaternary structure, F-type ATPases have 2 components, F(1) - the catalytic core - and F(0) - the membrane proton channel. F(1) has five subunits: alpha(3), beta(3), gamma(1), delta(1), epsilon(1). F(0) has three main subunits: a(1), b(2) and c(10-14). The alpha and beta chains form an alternating ring which encloses part of the gamma chain. F(1) is attached to F(0) by a central stalk formed by the gamma and epsilon chains, while a peripheral stalk is formed by the delta and b chains.

Its subcellular location is the cell inner membrane. In terms of biological role, f(1)F(0) ATP synthase produces ATP from ADP in the presence of a proton or sodium gradient. F-type ATPases consist of two structural domains, F(1) containing the extramembraneous catalytic core and F(0) containing the membrane proton channel, linked together by a central stalk and a peripheral stalk. During catalysis, ATP synthesis in the catalytic domain of F(1) is coupled via a rotary mechanism of the central stalk subunits to proton translocation. Its function is as follows. This protein is part of the stalk that links CF(0) to CF(1). It either transmits conformational changes from CF(0) to CF(1) or is implicated in proton conduction. The polypeptide is ATP synthase subunit delta (Sinorhizobium fredii (strain NBRC 101917 / NGR234)).